Consider the following 497-residue polypeptide: POU domain, class 3, transcription factor 3 (497 aa).

The segment covering 31–51 has biased composition (gly residues); the sequence is GGGGGGGGGGGGAGGGGGGMQ. 4 disordered regions span residues 31–62, 121–189, 230–316, and 458–497; these read GGGG…SGAY, WSGS…WGAA, NGML…TPTS, and EKRM…TSVQ. Pro residues-rich tracts occupy residues 133–145 and 170–180; these read QQPP…PPQG and HLGPPPPPPHQ. Gly residues predominate over residues 240–250; it reads GGGGGGAGGGA. The span at 269–286 shows a compositional bias: basic residues; the sequence is HHHHHHHHAHPHPPHPHH. The 75-residue stretch at 311-385 folds into the POU-specific domain; that stretch reads EDTPTSDDLE…LLNKWLEEAD (75 aa). A DNA-binding region (homeobox) is located at residues 403–462; it reads KRKKRTSIEVSVKGALESHFLKCPKPSAQEITNLADSLQLEKEVVRVWFCNRRQKEKRMT. Polar residues predominate over residues 465 to 483; it reads GIQQQTPDDVYSQVGTVSA.

Belongs to the POU transcription factor family. Class-3 subfamily. Homodimer. As to expression, brain.

The protein resides in the nucleus. In terms of biological role, transcription factor that acts synergistically with SOX11 and SOX4. Plays a role in neuronal development. Is implicated in an enhancer activity at the embryonic met-mesencephalic junction; the enhancer element contains the octamer motif (5'-ATTTGCAT-3'). The chain is POU domain, class 3, transcription factor 3 (Pou3f3) from Rattus norvegicus (Rat).